The sequence spans 692 residues: Elongation factor G (692 aa).

The 276-residue stretch at 9–284 folds into the tr-type G domain; the sequence is HMVRNIGIAA…AVVDYLPAPD (276 aa). Residues 18–25, 82–86, and 136–139 contribute to the GTP site; these read AHIDAGKT, DTPGH, and NKMD.

It belongs to the TRAFAC class translation factor GTPase superfamily. Classic translation factor GTPase family. EF-G/EF-2 subfamily.

The protein localises to the cytoplasm. In terms of biological role, catalyzes the GTP-dependent ribosomal translocation step during translation elongation. During this step, the ribosome changes from the pre-translocational (PRE) to the post-translocational (POST) state as the newly formed A-site-bound peptidyl-tRNA and P-site-bound deacylated tRNA move to the P and E sites, respectively. Catalyzes the coordinated movement of the two tRNA molecules, the mRNA and conformational changes in the ribosome. In Campylobacter curvus (strain 525.92), this protein is Elongation factor G.